The sequence spans 423 residues: Large ribosomal subunit protein mL37 (423 aa).

The N-terminal 29 residues, 1–29, are a transit peptide targeting the mitochondrion; it reads MALASGPARRALAGSGQLGLGGFGAPRRG.

Belongs to the mitochondrion-specific ribosomal protein mL37 family. In terms of assembly, component of the mitochondrial large ribosomal subunit (mt-LSU). Mature mammalian 55S mitochondrial ribosomes consist of a small (28S) and a large (39S) subunit. The 28S small subunit contains a 12S ribosomal RNA (12S mt-rRNA) and 30 different proteins. The 39S large subunit contains a 16S rRNA (16S mt-rRNA), a copy of mitochondrial valine transfer RNA (mt-tRNA(Val)), which plays an integral structural role, and 52 different proteins. mL37 forms a heterodimer with mL65.

It localises to the mitochondrion. This is Large ribosomal subunit protein mL37 (MRPL37) from Homo sapiens (Human).